Reading from the N-terminus, the 316-residue chain is L-lactate dehydrogenase (316 aa).

NAD(+)-binding positions include V15, D37, K42, Y68, and 82–83 (GL). Residues Q85, R91, and 123 to 126 (NPVD) each bind substrate. Residues 121–123 (ASN) and T146 contribute to the NAD(+) site. Residue 151–154 (DTSR) participates in substrate binding. Beta-D-fructose 1,6-bisphosphate is bound by residues R156 and H171. The Proton acceptor role is filled by H178. Position 222 is a phosphotyrosine (Y222). T231 is a binding site for substrate.

Belongs to the LDH/MDH superfamily. LDH family. In terms of assembly, homotetramer.

The protein localises to the cytoplasm. The catalysed reaction is (S)-lactate + NAD(+) = pyruvate + NADH + H(+). It participates in fermentation; pyruvate fermentation to lactate; (S)-lactate from pyruvate: step 1/1. With respect to regulation, allosterically activated by fructose 1,6-bisphosphate (FBP). Its function is as follows. Catalyzes the conversion of lactate to pyruvate. The chain is L-lactate dehydrogenase from Borreliella burgdorferi (strain ATCC 35210 / DSM 4680 / CIP 102532 / B31) (Borrelia burgdorferi).